A 163-amino-acid polypeptide reads, in one-letter code: Crossover junction endodeoxyribonuclease RuvC (163 aa).

Active-site residues include aspartate 7, glutamate 68, and histidine 142. Mg(2+) is bound by residues aspartate 7, glutamate 68, and histidine 142.

This sequence belongs to the RuvC family. In terms of assembly, homodimer which binds Holliday junction (HJ) DNA. The HJ becomes 2-fold symmetrical on binding to RuvC with unstacked arms; it has a different conformation from HJ DNA in complex with RuvA. In the full resolvosome a probable DNA-RuvA(4)-RuvB(12)-RuvC(2) complex forms which resolves the HJ. Mg(2+) serves as cofactor.

Its subcellular location is the cytoplasm. It catalyses the reaction Endonucleolytic cleavage at a junction such as a reciprocal single-stranded crossover between two homologous DNA duplexes (Holliday junction).. Functionally, the RuvA-RuvB-RuvC complex processes Holliday junction (HJ) DNA during genetic recombination and DNA repair. Endonuclease that resolves HJ intermediates. Cleaves cruciform DNA by making single-stranded nicks across the HJ at symmetrical positions within the homologous arms, yielding a 5'-phosphate and a 3'-hydroxyl group; requires a central core of homology in the junction. The consensus cleavage sequence is 5'-(A/T)TT(C/G)-3'. Cleavage occurs on the 3'-side of the TT dinucleotide at the point of strand exchange. HJ branch migration catalyzed by RuvA-RuvB allows RuvC to scan DNA until it finds its consensus sequence, where it cleaves and resolves the cruciform DNA. The chain is Crossover junction endodeoxyribonuclease RuvC from Anaplasma phagocytophilum (strain HZ).